Consider the following 132-residue polypeptide: L-ectoine synthase (132 aa).

The protein belongs to the ectoine synthase family.

It catalyses the reaction (2S)-4-acetamido-2-aminobutanoate = L-ectoine + H2O. It participates in amine and polyamine biosynthesis; ectoine biosynthesis; L-ectoine from L-aspartate 4-semialdehyde: step 3/3. Catalyzes the circularization of gamma-N-acetyl-alpha,gamma-diaminobutyric acid (ADABA) to ectoine (1,4,5,6-tetrahydro-2-methyl-4-pyrimidine carboxylic acid), which is an excellent osmoprotectant. In Saccharophagus degradans (strain 2-40 / ATCC 43961 / DSM 17024), this protein is L-ectoine synthase.